Consider the following 110-residue polypeptide: Endoribonuclease SymE (110 aa).

The 46-residue stretch at 29 to 74 folds into the SpoVT-AbrB domain; it reads SRYPDYTRIPALTMKGQWLEAAGFATGTEVDVRVMNGCIVLTAQQP.

This sequence belongs to the SymE family.

The protein localises to the cytoplasm. Involved in the degradation and recycling of damaged RNA. It is itself a target for degradation by the ATP-dependent protease Lon. This chain is Endoribonuclease SymE, found in Salmonella typhi.